Consider the following 97-residue polypeptide: NADH-ubiquinone oxidoreductase chain 4L (97 aa).

3 helical membrane-spanning segments follow: residues 1 to 21 (MALLIIILSMFYLGLMGILLN), 23 to 43 (LHFLSILLCLELLLISLFIGI), and 60 to 80 (LLLLTLSACEASIGLSLMVAL).

It belongs to the complex I subunit 4L family.

It is found in the mitochondrion membrane. The enzyme catalyses a ubiquinone + NADH + 5 H(+)(in) = a ubiquinol + NAD(+) + 4 H(+)(out). Its function is as follows. Core subunit of the mitochondrial membrane respiratory chain NADH dehydrogenase (Complex I) that is believed to belong to the minimal assembly required for catalysis. Complex I functions in the transfer of electrons from NADH to the respiratory chain. The immediate electron acceptor for the enzyme is believed to be ubiquinone. The chain is NADH-ubiquinone oxidoreductase chain 4L (ND4L) from Paracentrotus lividus (Common sea urchin).